The chain runs to 205 residues: High frequency lysogenization protein HflD homolog (205 aa).

It belongs to the HflD family.

Its subcellular location is the cytoplasm. The protein localises to the cell inner membrane. The chain is High frequency lysogenization protein HflD homolog from Shewanella sp. (strain W3-18-1).